We begin with the raw amino-acid sequence, 505 residues long: Deoxyguanosinetriphosphate triphosphohydrolase (505 aa).

An HD domain is found at 66-273; that stretch reads RLTHSMEVQQ…MEAADDISYC (208 aa).

This sequence belongs to the dGTPase family. Type 1 subfamily. In terms of assembly, homotetramer. Requires Mg(2+) as cofactor.

It carries out the reaction dGTP + H2O = 2'-deoxyguanosine + triphosphate + H(+). In terms of biological role, dGTPase preferentially hydrolyzes dGTP over the other canonical NTPs. The protein is Deoxyguanosinetriphosphate triphosphohydrolase of Salmonella schwarzengrund (strain CVM19633).